Reading from the N-terminus, the 117-residue chain is Hydrogenase maturation factor HypA (117 aa).

Ni(2+) is bound at residue H2. The Zn(2+) site is built by C73, C76, C92, and C95.

The protein belongs to the HypA/HybF family.

Functionally, involved in the maturation of [NiFe] hydrogenases. Required for nickel insertion into the metal center of the hydrogenase. The protein is Hydrogenase maturation factor HypA of Solidesulfovibrio magneticus (strain ATCC 700980 / DSM 13731 / RS-1) (Desulfovibrio magneticus).